A 156-amino-acid chain; its full sequence is Small ribosomal subunit protein uS7 (156 aa).

This sequence belongs to the universal ribosomal protein uS7 family. In terms of assembly, part of the 30S ribosomal subunit. Contacts proteins S9 and S11.

Functionally, one of the primary rRNA binding proteins, it binds directly to 16S rRNA where it nucleates assembly of the head domain of the 30S subunit. Is located at the subunit interface close to the decoding center, probably blocks exit of the E-site tRNA. The sequence is that of Small ribosomal subunit protein uS7 from Shewanella halifaxensis (strain HAW-EB4).